Reading from the N-terminus, the 540-residue chain is Phosphomethylpyrimidine synthase (540 aa).

Residues N143, M172, Y201, H237, 257–259, 298–301, and E337 contribute to the substrate site; these read SRG and DGLR. Residue H341 coordinates Zn(2+). Y364 is a substrate binding site. H405 is a binding site for Zn(2+). Residues C485, C488, and C493 each coordinate [4Fe-4S] cluster.

It belongs to the ThiC family. [4Fe-4S] cluster is required as a cofactor.

It carries out the reaction 5-amino-1-(5-phospho-beta-D-ribosyl)imidazole + S-adenosyl-L-methionine = 4-amino-2-methyl-5-(phosphooxymethyl)pyrimidine + CO + 5'-deoxyadenosine + formate + L-methionine + 3 H(+). The protein operates within cofactor biosynthesis; thiamine diphosphate biosynthesis. Functionally, catalyzes the synthesis of the hydroxymethylpyrimidine phosphate (HMP-P) moiety of thiamine from aminoimidazole ribotide (AIR) in a radical S-adenosyl-L-methionine (SAM)-dependent reaction. This chain is Phosphomethylpyrimidine synthase, found in Mycobacterium avium (strain 104).